A 507-amino-acid chain; its full sequence is MKCMSIKAEEISALIKKQIENYQSEIEVSDVGTVIQVGDGIARAHGLDNVMSGELVEFANGVMGLALNLEENNVGIVILGPYTGIKEGDEVRRTGRIMEVPVGEALIGRVVNPLGQPVDGLGPIETTETRPIESPAPGVMDRKSVHEPLQTGIKAIDALVPIGRGQRELIIGDRQTGKTSVAVDTIINQKGKNMICIYVAIGQKESTVRNVVETLRKYGALDYTIVVTASASQPAPLLFLAPYAGVTMGEYFMYKGQHVLVVYDDLSKQAAAYRELSLLLRRPPGREAYPGDVFYLHSRLLERAAKLSDAKGAGSLTALPFVETQAGDISAYIPTNVISITDGQIFLQSDLFFSGVRPAINAGLSVSRVGGAAQIKAMKKVSGTLRLDLAAYRELEAFAQFGSDLDKATQAKLARGARTVEVLKQGLHEPLPVEKQVAIIYALTRGFLDDIPVEDIRRFEKEFHAWLDKDENGQKLMEHIRTTGDLPNEEDFNKAIEAFKKTFVVSE.

The segment at 118-141 (VDGLGPIETTETRPIESPAPGVMD) is disordered. Position 172-179 (172-179 (GDRQTGKT)) interacts with ATP.

This sequence belongs to the ATPase alpha/beta chains family. In terms of assembly, F-type ATPases have 2 components, CF(1) - the catalytic core - and CF(0) - the membrane proton channel. CF(1) has five subunits: alpha(3), beta(3), gamma(1), delta(1), epsilon(1). CF(0) has three main subunits: a(1), b(2) and c(9-12). The alpha and beta chains form an alternating ring which encloses part of the gamma chain. CF(1) is attached to CF(0) by a central stalk formed by the gamma and epsilon chains, while a peripheral stalk is formed by the delta and b chains.

Its subcellular location is the cell membrane. The catalysed reaction is ATP + H2O + 4 H(+)(in) = ADP + phosphate + 5 H(+)(out). Its function is as follows. Produces ATP from ADP in the presence of a proton gradient across the membrane. The alpha chain is a regulatory subunit. The polypeptide is ATP synthase subunit alpha (Anoxybacillus flavithermus (strain DSM 21510 / WK1)).